A 257-amino-acid polypeptide reads, in one-letter code: Cilia- and flagella-associated protein 300 (257 aa).

It belongs to the CFAP300 family.

It localises to the cytoplasm. The protein resides in the cytoskeleton. Its subcellular location is the flagellum axoneme. Its function is as follows. Cilium- and flagellum-specific protein that plays a role in axonemal structure organization and motility. Plays a role in outer and inner dynein arm assembly. This Chlamydomonas reinhardtii (Chlamydomonas smithii) protein is Cilia- and flagella-associated protein 300.